The chain runs to 743 residues: MSADSPSSPASSQAAEVQVRLPDGSLKTQPADATAMDVAKEISEGLARSVVAAEVDGTIVDSFRPLGEIADDENVVPLRLLTTRDESALDVLRHSAAHVMARAIMRIYKGVSLAFGPTTSGGFYYDFDMPEKISEDDFPKIEAEIKKIIKAKEPFERFVLERDEARKLCDDLDQDLKVEHIETGLGDQATVSFYRQGEFVDLCRGPHIPHAGMIKAIKLLSVAGAYWKGDASGRQLQRVYGTAFFDKKELASYLEQIEEAKRRDHRVLGKQHGLFAINPEVGQGLCLWLPKGARVRVTLEDFLRRELLSRGYDPVYSPHIGRVEMYETSGHFPYYRDSQFAPLFGSEVGGLLDAWSTRLDKDDLSKDDEDKLIAAAEVFGVKLPDYKPSASNDAKKDVLHRWQLNHERYLLKPMNCPHHCQIFGAQPRSYRQLPLRLFEFGTVYRHEQTGELNGMMRVRGLTQDDAHIFCTADQVEEEFRATIELTKFVLESVGLDDYRVQLSLRDPDSSKYVGSEENWDHAEGALRGVLEQSGLSFNEEPGEAAFYGPKADFMVRDCIGRSWQLGTVQLDYNLPERFKLEYKGNDNATHRPVMIHRAPFGSLERFTGMLIEHFAGAFPMWLSPEQIRVLPLSDKSVEYATAVAKQLDEAGFKVTVDASDGKVQAKIRNAQIDLVNYMAVVGPKEAESGQVALRDRIEGDLGSMPIKEAIARLQKEVETRQVRQAVKGSTVSIAETGGAATDY.

Residues 1 to 15 are compositionally biased toward low complexity; it reads MSADSPSSPASSQAA. The disordered stretch occupies residues 1–30; that stretch reads MSADSPSSPASSQAAEVQVRLPDGSLKTQP. In terms of domain architecture, TGS spans 13–76; the sequence is QAAEVQVRLP…GEIADDENVV (64 aa). Positions 264–619 are catalytic; it reads DHRVLGKQHG…LIEHFAGAFP (356 aa). The segment at 354–404 is insert; that stretch reads AWSTRLDKDDLSKDDEDKLIAAAEVFGVKLPDYKPSASNDAKKDVLHRWQL. Positions 416, 467, and 596 each coordinate Zn(2+).

It belongs to the class-II aminoacyl-tRNA synthetase family. As to quaternary structure, homodimer. Zn(2+) serves as cofactor.

It localises to the cytoplasm. The catalysed reaction is tRNA(Thr) + L-threonine + ATP = L-threonyl-tRNA(Thr) + AMP + diphosphate + H(+). In terms of biological role, catalyzes the attachment of threonine to tRNA(Thr) in a two-step reaction: L-threonine is first activated by ATP to form Thr-AMP and then transferred to the acceptor end of tRNA(Thr). Also edits incorrectly charged L-seryl-tRNA(Thr). This is Threonine--tRNA ligase from Rhodopirellula baltica (strain DSM 10527 / NCIMB 13988 / SH1).